A 155-amino-acid polypeptide reads, in one-letter code: Ribosomal RNA large subunit methyltransferase H (155 aa).

Residues leucine 73, glycine 104, and 123–128 (LSPLTL) contribute to the S-adenosyl-L-methionine site.

It belongs to the RNA methyltransferase RlmH family. In terms of assembly, homodimer.

It is found in the cytoplasm. The enzyme catalyses pseudouridine(1915) in 23S rRNA + S-adenosyl-L-methionine = N(3)-methylpseudouridine(1915) in 23S rRNA + S-adenosyl-L-homocysteine + H(+). Its function is as follows. Specifically methylates the pseudouridine at position 1915 (m3Psi1915) in 23S rRNA. This Azotobacter vinelandii (strain DJ / ATCC BAA-1303) protein is Ribosomal RNA large subunit methyltransferase H.